Here is a 1361-residue protein sequence, read N- to C-terminus: DNA-directed RNA polymerase subunit beta' (1361 aa).

4 residues coordinate Zn(2+): Cys-69, Cys-71, Cys-84, and Cys-87. Mg(2+) is bound by residues Asp-460, Asp-462, and Asp-464. Zn(2+) contacts are provided by Cys-808, Cys-882, Cys-889, and Cys-892.

Belongs to the RNA polymerase beta' chain family. The RNAP catalytic core consists of 2 alpha, 1 beta, 1 beta' and 1 omega subunit. When a sigma factor is associated with the core the holoenzyme is formed, which can initiate transcription. It depends on Mg(2+) as a cofactor. Zn(2+) serves as cofactor.

The enzyme catalyses RNA(n) + a ribonucleoside 5'-triphosphate = RNA(n+1) + diphosphate. Its function is as follows. DNA-dependent RNA polymerase catalyzes the transcription of DNA into RNA using the four ribonucleoside triphosphates as substrates. The sequence is that of DNA-directed RNA polymerase subunit beta' from Rickettsia bellii (strain RML369-C).